Reading from the N-terminus, the 190-residue chain is Signal peptidase I W (190 aa).

The helical transmembrane segment at 4-24 (ISNILYVIIFTLIIVLTLVVI) threads the bilayer. Residue Ser-45 is part of the active site. A helical membrane pass occupies residues 143–163 (PIGTAVLLIVPGVMLLVYAFV).

This sequence belongs to the peptidase S26B family.

The protein resides in the cell membrane. It carries out the reaction Cleavage of hydrophobic, N-terminal signal or leader sequences from secreted and periplasmic proteins.. Functionally, required for the cleavage of the signal sequence of TasA and TapA, which are involved in biofilm formation. The chain is Signal peptidase I W from Bacillus subtilis (strain 168).